The sequence spans 284 residues: Bifunctional protein FolD (284 aa).

Residues 165-167 (GAS), serine 190, and isoleucine 231 contribute to the NADP(+) site.

The protein belongs to the tetrahydrofolate dehydrogenase/cyclohydrolase family. Homodimer.

The enzyme catalyses (6R)-5,10-methylene-5,6,7,8-tetrahydrofolate + NADP(+) = (6R)-5,10-methenyltetrahydrofolate + NADPH. The catalysed reaction is (6R)-5,10-methenyltetrahydrofolate + H2O = (6R)-10-formyltetrahydrofolate + H(+). Its pathway is one-carbon metabolism; tetrahydrofolate interconversion. Catalyzes the oxidation of 5,10-methylenetetrahydrofolate to 5,10-methenyltetrahydrofolate and then the hydrolysis of 5,10-methenyltetrahydrofolate to 10-formyltetrahydrofolate. In Polynucleobacter asymbioticus (strain DSM 18221 / CIP 109841 / QLW-P1DMWA-1) (Polynucleobacter necessarius subsp. asymbioticus), this protein is Bifunctional protein FolD.